The sequence spans 431 residues: Serine--tRNA ligase (431 aa).

237-239 contributes to the L-serine binding site; it reads TAE. 268–270 lines the ATP pocket; the sequence is RSE. Position 291 (Glu-291) interacts with L-serine. 355-358 contributes to the ATP binding site; sequence EISS. Ser-390 is an L-serine binding site.

It belongs to the class-II aminoacyl-tRNA synthetase family. Type-1 seryl-tRNA synthetase subfamily. In terms of assembly, homodimer. The tRNA molecule binds across the dimer.

It is found in the cytoplasm. The enzyme catalyses tRNA(Ser) + L-serine + ATP = L-seryl-tRNA(Ser) + AMP + diphosphate + H(+). It carries out the reaction tRNA(Sec) + L-serine + ATP = L-seryl-tRNA(Sec) + AMP + diphosphate + H(+). It functions in the pathway aminoacyl-tRNA biosynthesis; selenocysteinyl-tRNA(Sec) biosynthesis; L-seryl-tRNA(Sec) from L-serine and tRNA(Sec): step 1/1. Functionally, catalyzes the attachment of serine to tRNA(Ser). Is also able to aminoacylate tRNA(Sec) with serine, to form the misacylated tRNA L-seryl-tRNA(Sec), which will be further converted into selenocysteinyl-tRNA(Sec). The chain is Serine--tRNA ligase from Neisseria gonorrhoeae (strain NCCP11945).